A 393-amino-acid polypeptide reads, in one-letter code: Formate-dependent phosphoribosylglycinamide formyltransferase (393 aa).

N(1)-(5-phospho-beta-D-ribosyl)glycinamide is bound by residues Glu-22–Leu-23 and Glu-82. Residues Arg-114, Lys-155, Ser-160–Gln-165, Glu-195–Val-198, and Glu-203 each bind ATP. One can recognise an ATP-grasp domain in the interval Arg-119–Leu-308. Residues Glu-267 and Glu-279 each coordinate Mg(2+). N(1)-(5-phospho-beta-D-ribosyl)glycinamide is bound by residues Asp-286, Lys-356, and Arg-363 to Arg-364.

The protein belongs to the PurK/PurT family. In terms of assembly, homodimer.

The catalysed reaction is N(1)-(5-phospho-beta-D-ribosyl)glycinamide + formate + ATP = N(2)-formyl-N(1)-(5-phospho-beta-D-ribosyl)glycinamide + ADP + phosphate + H(+). Its pathway is purine metabolism; IMP biosynthesis via de novo pathway; N(2)-formyl-N(1)-(5-phospho-D-ribosyl)glycinamide from N(1)-(5-phospho-D-ribosyl)glycinamide (formate route): step 1/1. Its function is as follows. Involved in the de novo purine biosynthesis. Catalyzes the transfer of formate to 5-phospho-ribosyl-glycinamide (GAR), producing 5-phospho-ribosyl-N-formylglycinamide (FGAR). Formate is provided by PurU via hydrolysis of 10-formyl-tetrahydrofolate. This is Formate-dependent phosphoribosylglycinamide formyltransferase from Nitratidesulfovibrio vulgaris (strain ATCC 29579 / DSM 644 / CCUG 34227 / NCIMB 8303 / VKM B-1760 / Hildenborough) (Desulfovibrio vulgaris).